The primary structure comprises 561 residues: Potassium-transporting ATPase potassium-binding subunit (561 aa).

Transmembrane regions (helical) follow at residues 5-25, 63-83, 103-122, 133-153, 179-199, 255-275, 281-301, 380-400, 418-438, 485-505, and 531-551; these read IELF…GTYM, KYAL…YFIL, LAFN…HYAG, IVIV…AAAI, LLPI…PQTF, IEML…GLMI, ALVL…GAVY, AGLQ…GLMV, LIAL…ALTV, IMTG…MLAV, and AIFI…AVIL.

The protein belongs to the KdpA family. As to quaternary structure, the system is composed of three essential subunits: KdpA, KdpB and KdpC.

It localises to the cell membrane. Functionally, part of the high-affinity ATP-driven potassium transport (or Kdp) system, which catalyzes the hydrolysis of ATP coupled with the electrogenic transport of potassium into the cytoplasm. This subunit binds the extracellular potassium ions and delivers the ions to the membrane domain of KdpB through an intramembrane tunnel. The protein is Potassium-transporting ATPase potassium-binding subunit of Caldanaerobacter subterraneus subsp. tengcongensis (strain DSM 15242 / JCM 11007 / NBRC 100824 / MB4) (Thermoanaerobacter tengcongensis).